The sequence spans 374 residues: Alpha-N-acetylgalactosaminide alpha-2,6-sialyltransferase 2 (374 aa).

Topologically, residues 1 to 7 (MGLPRGS) are cytoplasmic. Residues 8–28 (FFWLLLLLTAACSGLLFALYF) traverse the membrane as a helical; Signal-anchor for type II membrane protein segment. Topologically, residues 29-374 (SAVQRYPGPA…KAGILQLYQR (346 aa)) are lumenal. 2 cysteine pairs are disulfide-bonded: Cys-66–Cys-148 and Cys-151–Cys-317. N-linked (GlcNAc...) asparagine glycosylation is found at Asn-85 and Asn-130. Residue Asn-156 coordinates CMP-N-acetyl-beta-neuraminate. A glycan (N-linked (GlcNAc...) asparagine) is linked at Asn-161. Asn-179, Ser-304, and His-336 together coordinate CMP-N-acetyl-beta-neuraminate.

The protein belongs to the glycosyltransferase 29 family. In terms of tissue distribution, expressed in skeletal muscle, heart, kidney, placenta, lung and leukocytes.

The protein resides in the golgi apparatus membrane. The enzyme catalyses a beta-D-galactosyl-(1-&gt;3)-N-acetyl-alpha-D-galactosaminyl derivative + CMP-N-acetyl-beta-neuraminate = a beta-D-galactosyl-(1-&gt;3)-[N-acetyl-alpha-neuraminyl-(2-&gt;6)]-N-acetyl-alpha-D-galactosaminyl derivative + CMP + H(+). It carries out the reaction a 3-O-[N-acetyl-alpha-D-galactosaminyl]-L-threonyl-[protein] + CMP-N-acetyl-beta-neuraminate = a 3-O-[N-acetyl-alpha-neuraminosyl-(2-&gt;6)-N-acetyl-alpha-D-galactosaminyl]-L-threonyl-[protein] + CMP + H(+). It catalyses the reaction a 3-O-[N-acetyl-alpha-neuraminyl-(2-&gt;3)-beta-D-galactosyl-(1-&gt;3)-N-acetyl-alpha-D-galactosaminyl]-L-threonyl-[protein] + CMP-N-acetyl-beta-neuraminate = a 3-O-{alpha-Neu5Ac-(2-&gt;3)-beta-D-Gal-(1-&gt;3)-[alpha-Neu5Ac-(2-&gt;6)]-alpha-D-GalNAc}-L-threonyl-[protein] + CMP + H(+). It participates in protein modification; protein glycosylation. Functionally, catalyzes the transfer of N-acetylneuraminyl groups onto glycan chains in glycoproteins. Conjugates sialic acid with an alpha-2-6 linkage to N-acetylgalactosamine (GalNAc) glycan chains linked to serine or threonine in glycoproteins. Sialylates alphaGalNAc- and Galbeta1-&gt;3GalNAc-O-Ser/Thr epitopes also known as Tn and T antigens. In Homo sapiens (Human), this protein is Alpha-N-acetylgalactosaminide alpha-2,6-sialyltransferase 2 (ST6GALNAC2).